A 388-amino-acid polypeptide reads, in one-letter code: Succinate--CoA ligase [ADP-forming] subunit beta (388 aa).

The ATP-grasp domain maps to 9–244 (KQLFAEYGLP…PSQEDEREAH (236 aa)). ATP contacts are provided by residues Lys-46, 53 to 55 (GRG), Glu-99, Thr-102, and Glu-107. The Mg(2+) site is built by Asn-199 and Asp-213. Residues Asn-264 and 321–323 (GIV) contribute to the substrate site.

This sequence belongs to the succinate/malate CoA ligase beta subunit family. In terms of assembly, heterotetramer of two alpha and two beta subunits. It depends on Mg(2+) as a cofactor.

The catalysed reaction is succinate + ATP + CoA = succinyl-CoA + ADP + phosphate. It carries out the reaction GTP + succinate + CoA = succinyl-CoA + GDP + phosphate. It participates in carbohydrate metabolism; tricarboxylic acid cycle; succinate from succinyl-CoA (ligase route): step 1/1. Succinyl-CoA synthetase functions in the citric acid cycle (TCA), coupling the hydrolysis of succinyl-CoA to the synthesis of either ATP or GTP and thus represents the only step of substrate-level phosphorylation in the TCA. The beta subunit provides nucleotide specificity of the enzyme and binds the substrate succinate, while the binding sites for coenzyme A and phosphate are found in the alpha subunit. The protein is Succinate--CoA ligase [ADP-forming] subunit beta of Colwellia psychrerythraea (strain 34H / ATCC BAA-681) (Vibrio psychroerythus).